A 298-amino-acid polypeptide reads, in one-letter code: Lipoyl synthase (298 aa).

[4Fe-4S] cluster is bound by residues Cys-37, Cys-42, Cys-48, Cys-63, Cys-67, Cys-70, and Ser-277. One can recognise a Radical SAM core domain in the interval 49-266; sequence WGGGTATVML…KTLAESYGFL (218 aa).

It belongs to the radical SAM superfamily. Lipoyl synthase family. It depends on [4Fe-4S] cluster as a cofactor.

It localises to the cytoplasm. It carries out the reaction [[Fe-S] cluster scaffold protein carrying a second [4Fe-4S](2+) cluster] + N(6)-octanoyl-L-lysyl-[protein] + 2 oxidized [2Fe-2S]-[ferredoxin] + 2 S-adenosyl-L-methionine + 4 H(+) = [[Fe-S] cluster scaffold protein] + N(6)-[(R)-dihydrolipoyl]-L-lysyl-[protein] + 4 Fe(3+) + 2 hydrogen sulfide + 2 5'-deoxyadenosine + 2 L-methionine + 2 reduced [2Fe-2S]-[ferredoxin]. The protein operates within protein modification; protein lipoylation via endogenous pathway; protein N(6)-(lipoyl)lysine from octanoyl-[acyl-carrier-protein]: step 2/2. In terms of biological role, catalyzes the radical-mediated insertion of two sulfur atoms into the C-6 and C-8 positions of the octanoyl moiety bound to the lipoyl domains of lipoate-dependent enzymes, thereby converting the octanoylated domains into lipoylated derivatives. This Myxococcus xanthus (strain DK1622) protein is Lipoyl synthase.